We begin with the raw amino-acid sequence, 272 residues long: MNVSQVSNHIVVIKLGGSVLSSKDTSLKDIAALKQLGLKPVLIHGGASTVSDWSAKLGLETRLVNGERVTDDPTLDVVAAVLTGLVNKEIVAALLDMGVQAAGISGVDGATITGQMRATETGYLGDVTAVNTGLINALLDKDITPVISPVSFHHTKRPSGSRRLININGDPAAGEIAAALQAERLVFMTDVPAVKGKNGEALGEISAEHAAELLSSGTASGGMIPKLRSCLKATLAGASACIIDGRIPHMLVRELTEGNCGTTIIGQHLRRS.

Substrate contacts are provided by residues 46–47 (GA), Arg68, and Asn166.

It belongs to the acetylglutamate kinase family. ArgB subfamily.

It localises to the cytoplasm. It catalyses the reaction N-acetyl-L-glutamate + ATP = N-acetyl-L-glutamyl 5-phosphate + ADP. It participates in amino-acid biosynthesis; L-arginine biosynthesis; N(2)-acetyl-L-ornithine from L-glutamate: step 2/4. Its function is as follows. Catalyzes the ATP-dependent phosphorylation of N-acetyl-L-glutamate. The protein is Acetylglutamate kinase of Dehalococcoides mccartyi (strain ATCC BAA-2266 / KCTC 15142 / 195) (Dehalococcoides ethenogenes (strain 195)).